The primary structure comprises 628 residues: 2-oxoacid:ferredoxin oxidoreductase 2, subunit alpha (628 aa).

A YPITP motif motif is present at residues 254–258 (YPITP). The substrate site is built by Thr-257 and Arg-344.

In terms of assembly, heterodimer composed of an alpha and a beta subunit.

The enzyme catalyses a 2-oxocarboxylate + 2 oxidized [2Fe-2S]-[ferredoxin] + CoA = an acyl-CoA + 2 reduced [2Fe-2S]-[ferredoxin] + CO2 + H(+). Catalyzes the coenzyme A-dependent oxidative decarboxylation of different 2-oxoacids such as 2-oxoglutarate, pyruvate and 2-oxobutyrate to form their CoA derivatives. The chain is 2-oxoacid:ferredoxin oxidoreductase 2, subunit alpha from Sulfurisphaera tokodaii (strain DSM 16993 / JCM 10545 / NBRC 100140 / 7) (Sulfolobus tokodaii).